A 594-amino-acid chain; its full sequence is A-type ATP synthase subunit A (594 aa).

236–243 (GPFGSGKT) lines the ATP pocket.

Belongs to the ATPase alpha/beta chains family. As to quaternary structure, has multiple subunits with at least A(3), B(3), C, D, E, F, H, I and proteolipid K(x).

It is found in the cell membrane. It carries out the reaction ATP + H2O + 4 H(+)(in) = ADP + phosphate + 5 H(+)(out). Its function is as follows. Component of the A-type ATP synthase that produces ATP from ADP in the presence of a proton gradient across the membrane. The A chain is the catalytic subunit. The protein is A-type ATP synthase subunit A of Pyrobaculum neutrophilum (strain DSM 2338 / JCM 9278 / NBRC 100436 / V24Sta) (Thermoproteus neutrophilus).